A 373-amino-acid chain; its full sequence is RNA cytidine acetyltransferase (373 aa).

R53 is a binding site for ATP. Residues 216–218 (IAT) and 223–229 (TGMGYGS) each bind acetyl-CoA. The segment at 246 to 271 (GEFEEENEAAKPADEESDDESNLLKE) is disordered. Residue R313 coordinates acetyl-CoA.

This sequence belongs to the RNA cytidine acetyltransferase family. NAT10 subfamily.

It is found in the nucleus. The protein resides in the nucleolus. The catalysed reaction is a cytidine in 18S rRNA + acetyl-CoA + ATP + H2O = an N(4)-acetylcytidine in 18S rRNA + ADP + phosphate + CoA + H(+). It catalyses the reaction a cytidine in tRNA + acetyl-CoA + ATP + H2O = an N(4)-acetylcytidine in tRNA + ADP + phosphate + CoA + H(+). RNA cytidine acetyltransferase with specificity toward both 18S rRNA and tRNAs. Catalyzes the formation of N(4)-acetylcytidine (ac4C) in 18S rRNA. Required for early nucleolar cleavages of precursor rRNA at sites A0, A1 and A2 during 18S rRNA synthesis. Catalyzes the formation of ac4C in serine and leucine tRNAs. Requires a tRNA-binding adapter protein for full tRNA acetyltransferase activity but not for 18S rRNA acetylation. This is RNA cytidine acetyltransferase from Achlya ambisexualis (Water mold).